Reading from the N-terminus, the 287-residue chain is MGETLKVIVLIDRILKSYRPLIAIPAAITVIALLLVVFNGLNESVDLKGGALAELTLEKSVTQAELESLLREKLGTGDIKVLSIRGERVTVQFGTDMDVVKVSEALRGTATINSYKAVGPVLSKQAMNQIYWAIGFAFLFMSVTVFIIFRDPVPSLAVILAAASDIIIAVGGMSLFGIPLSLASVGAILMLIGYSVDTDILLTTRVLKRRKGTINERALGAMKTGVTMSIAAIASMAALYLVTVFVMPEARVLSDIAAVLIIGLLADILTTWLMNLGILRWYLEVRS.

Helical transmembrane passes span 21 to 41, 129 to 149, 158 to 178, 182 to 202, 226 to 246, and 259 to 279; these read LIAI…FNGL, QIYW…FIIF, VILA…LFGI, LASV…DILL, VTMS…TVFV, and VLII…LGIL.

The protein belongs to the SecD/SecF family. SecF subfamily. As to quaternary structure, part of the protein translocation apparatus. Forms a complex with SecD.

The protein resides in the cell membrane. Involved in protein export. The chain is Protein-export membrane protein SecF from Methanothermobacter thermautotrophicus (strain ATCC 29096 / DSM 1053 / JCM 10044 / NBRC 100330 / Delta H) (Methanobacterium thermoautotrophicum).